The chain runs to 157 residues: Crossover junction endodeoxyribonuclease RuvC (157 aa).

Active-site residues include aspartate 7, glutamate 66, and aspartate 139. Positions 7, 66, and 139 each coordinate Mg(2+).

It belongs to the RuvC family. In terms of assembly, homodimer which binds Holliday junction (HJ) DNA. The HJ becomes 2-fold symmetrical on binding to RuvC with unstacked arms; it has a different conformation from HJ DNA in complex with RuvA. In the full resolvosome a probable DNA-RuvA(4)-RuvB(12)-RuvC(2) complex forms which resolves the HJ. Requires Mg(2+) as cofactor.

The protein localises to the cytoplasm. The catalysed reaction is Endonucleolytic cleavage at a junction such as a reciprocal single-stranded crossover between two homologous DNA duplexes (Holliday junction).. The RuvA-RuvB-RuvC complex processes Holliday junction (HJ) DNA during genetic recombination and DNA repair. Endonuclease that resolves HJ intermediates. Cleaves cruciform DNA by making single-stranded nicks across the HJ at symmetrical positions within the homologous arms, yielding a 5'-phosphate and a 3'-hydroxyl group; requires a central core of homology in the junction. The consensus cleavage sequence is 5'-(A/T)TT(C/G)-3'. Cleavage occurs on the 3'-side of the TT dinucleotide at the point of strand exchange. HJ branch migration catalyzed by RuvA-RuvB allows RuvC to scan DNA until it finds its consensus sequence, where it cleaves and resolves the cruciform DNA. This is Crossover junction endodeoxyribonuclease RuvC from Campylobacter concisus (strain 13826).